The primary structure comprises 496 residues: Glutamyl-tRNA(Gln) amidotransferase subunit A, mitochondrial (496 aa).

Active-site charge relay system residues include Lys75 and Ser162. The active-site Acyl-ester intermediate is the Ser186.

This sequence belongs to the amidase family. GatA subfamily. In terms of assembly, subunit of the heterotrimeric GatCAB amidotransferase (AdT) complex, composed of A, B and C subunits.

Its subcellular location is the mitochondrion. It carries out the reaction L-glutamyl-tRNA(Gln) + L-glutamine + ATP + H2O = L-glutaminyl-tRNA(Gln) + L-glutamate + ADP + phosphate + H(+). Allows the formation of correctly charged Gln-tRNA(Gln) through the transamidation of misacylated Glu-tRNA(Gln) in the mitochondria. The reaction takes place in the presence of glutamine and ATP through an activated gamma-phospho-Glu-tRNA(Gln). This Pediculus humanus subsp. corporis (Body louse) protein is Glutamyl-tRNA(Gln) amidotransferase subunit A, mitochondrial.